The sequence spans 100 residues: Urease subunit gamma (100 aa).

Belongs to the urease gamma subunit family. As to quaternary structure, heterotrimer of UreA (gamma), UreB (beta) and UreC (alpha) subunits. Three heterotrimers associate to form the active enzyme.

It is found in the cytoplasm. The enzyme catalyses urea + 2 H2O + H(+) = hydrogencarbonate + 2 NH4(+). Its pathway is nitrogen metabolism; urea degradation; CO(2) and NH(3) from urea (urease route): step 1/1. In Vibrio parahaemolyticus, this protein is Urease subunit gamma.